Consider the following 164-residue polypeptide: Phosphopantetheine adenylyltransferase (164 aa).

Serine 9 contributes to the substrate binding site. ATP contacts are provided by residues 9-10 and histidine 17; that span reads SF. Substrate is bound by residues lysine 41, leucine 73, and lysine 87. Residues 88–90, glutamate 98, and 123–129 each bind ATP; these read GLR and YSYLSSS.

Belongs to the bacterial CoaD family. Homohexamer. It depends on Mg(2+) as a cofactor.

It localises to the cytoplasm. It catalyses the reaction (R)-4'-phosphopantetheine + ATP + H(+) = 3'-dephospho-CoA + diphosphate. Its pathway is cofactor biosynthesis; coenzyme A biosynthesis; CoA from (R)-pantothenate: step 4/5. Its function is as follows. Reversibly transfers an adenylyl group from ATP to 4'-phosphopantetheine, yielding dephospho-CoA (dPCoA) and pyrophosphate. This chain is Phosphopantetheine adenylyltransferase, found in Clostridium botulinum (strain ATCC 19397 / Type A).